A 539-amino-acid chain; its full sequence is Alpha-aminoadipic semialdehyde dehydrogenase (539 aa).

The transit peptide at 1-26 (MWRVPGLLCVRVARKSKFSGSWNRPA) directs the protein to the mitochondrion. N6-acetyllysine; alternate is present on Lys-94. At Lys-94 the chain carries N6-succinyllysine; alternate. NAD(+) contacts are provided by residues 192-194 (TAF), Lys-218, 258-259 (GT), 274-275 (GS), 274-279 (GSTQVG), and 296-297 (EL). Catalysis depends on Glu-296, which acts as the Proton acceptor. Cys-330 functions as the Nucleophile in the catalytic mechanism. (S)-2-amino-6-oxohexanoate is bound at residue Thr-331. Glu-427 contacts NAD(+). The residue at position 462 (Lys-462) is an N6-acetyllysine. Residues Gly-489 and Ala-490 each contribute to the (S)-2-amino-6-oxohexanoate site. Lys-500 carries the post-translational modification N6-acetyllysine. The residue at position 537 (Lys-537) is an N6-succinyllysine.

Belongs to the aldehyde dehydrogenase family. In terms of assembly, homotetramer.

Its subcellular location is the cytoplasm. The protein resides in the cytosol. It is found in the nucleus. It localises to the mitochondrion. It catalyses the reaction nonanal + NAD(+) + H2O = nonanoate + NADH + 2 H(+). It carries out the reaction (S)-2-amino-6-oxohexanoate + NAD(+) + H2O = L-2-aminoadipate + NADH + 2 H(+). The enzyme catalyses betaine aldehyde + NAD(+) + H2O = glycine betaine + NADH + 2 H(+). The catalysed reaction is an aldehyde + NAD(+) + H2O = a carboxylate + NADH + 2 H(+). It catalyses the reaction hexanal + NAD(+) + H2O = hexanoate + NADH + 2 H(+). It carries out the reaction octanal + NAD(+) + H2O = octanoate + NADH + 2 H(+). The enzyme catalyses (E)-non-2-enal + NAD(+) + H2O = (E)-non-2-enoate + NADH + 2 H(+). The catalysed reaction is (E)-4-hydroxynon-2-enal + NAD(+) + H2O = (E)-4-hydroxynon-2-enoate + NADH + 2 H(+). Its pathway is amine and polyamine biosynthesis; betaine biosynthesis via choline pathway; betaine from betaine aldehyde: step 1/1. Functionally, multifunctional enzyme mediating important protective effects. Metabolizes betaine aldehyde to betaine, an important cellular osmolyte and methyl donor. Protects cells from oxidative stress by metabolizing a number of lipid peroxidation-derived aldehydes. Involved in lysine catabolism. This Bos taurus (Bovine) protein is Alpha-aminoadipic semialdehyde dehydrogenase (ALDH7A1).